The primary structure comprises 411 residues: Carbamoyl phosphate synthase arginine-specific small chain (411 aa).

The L-glutamine site is built by Ser-50, Gly-232, and Gly-234. The Glutamine amidotransferase type-1 domain occupies 185–376; sequence NVALIDCGVK…FDNIEKYQLQ (192 aa). Cys-264 acts as the Nucleophile in catalysis. The L-glutamine site is built by Leu-265, Gln-268, Asn-306, Gly-308, and Tyr-309. Residues His-349 and Glu-351 contribute to the active site.

The protein belongs to the CarA family. Heterodimer composed of 2 chains; the small (or glutamine) chain promotes the hydrolysis of glutamine to ammonia, which is used by the large (or ammonia) chain to synthesize carbamoyl phosphate.

The protein localises to the cytoplasm. The catalysed reaction is hydrogencarbonate + L-glutamine + 2 ATP + H2O = carbamoyl phosphate + L-glutamate + 2 ADP + phosphate + 2 H(+). The enzyme catalyses L-glutamine + H2O = L-glutamate + NH4(+). It participates in amino-acid biosynthesis; L-arginine biosynthesis; carbamoyl phosphate from bicarbonate: step 1/1. Its function is as follows. Small subunit of the arginine-specific carbamoyl phosphate synthase (CPSase). CPSase catalyzes the formation of carbamoyl phosphate from the ammonia moiety of glutamine, carbonate, and phosphate donated by ATP, constituting the first step of 2 biosynthetic pathways, one leading to arginine and/or urea and the other to pyrimidine nucleotides. The small subunit (glutamine amidotransferase) binds and cleaves glutamine to supply the large subunit with the substrate ammonia. The polypeptide is Carbamoyl phosphate synthase arginine-specific small chain (CPA1) (Saccharomyces cerevisiae (strain ATCC 204508 / S288c) (Baker's yeast)).